Here is a 134-residue protein sequence, read N- to C-terminus: UPF0412 protein YaaI (134 aa).

The signal sequence occupies residues 1 to 23 (MRSVLTISASLLFGLALSSVAHA).

This sequence belongs to the UPF0412 family.

The sequence is that of UPF0412 protein YaaI from Salmonella paratyphi B (strain ATCC BAA-1250 / SPB7).